The sequence spans 215 residues: Small ribosomal subunit protein uS7 (215 aa).

This sequence belongs to the universal ribosomal protein uS7 family. In terms of assembly, part of the 30S ribosomal subunit.

Its function is as follows. One of the primary rRNA binding proteins, it binds directly to 16S rRNA where it nucleates assembly of the head domain of the 30S subunit. Is located at the subunit interface close to the decoding center. This Thermococcus gammatolerans (strain DSM 15229 / JCM 11827 / EJ3) protein is Small ribosomal subunit protein uS7.